The primary structure comprises 481 residues: Glutamyl-tRNA(Gln) amidotransferase subunit A (481 aa).

Active-site charge relay system residues include Lys74 and Ser149. Ser173 (acyl-ester intermediate) is an active-site residue.

Belongs to the amidase family. GatA subfamily. Heterotrimer of A, B and C subunits.

The enzyme catalyses L-glutamyl-tRNA(Gln) + L-glutamine + ATP + H2O = L-glutaminyl-tRNA(Gln) + L-glutamate + ADP + phosphate + H(+). Allows the formation of correctly charged Gln-tRNA(Gln) through the transamidation of misacylated Glu-tRNA(Gln) in organisms which lack glutaminyl-tRNA synthetase. The reaction takes place in the presence of glutamine and ATP through an activated gamma-phospho-Glu-tRNA(Gln). In Francisella tularensis subsp. holarctica (strain FTNF002-00 / FTA), this protein is Glutamyl-tRNA(Gln) amidotransferase subunit A.